The chain runs to 69 residues: Peptide Hact-1 (69 aa).

An N-terminal signal peptide occupies residues 1 to 21 (MDRKFHLCLLLVILGTIIVQG). A propeptide spanning residues 22 to 57 (APLENENDADPDKPQKYRYYLKRATTEKKDNDPAKP) is cleaved from the precursor. Residues cysteine 59 and cysteine 68 are joined by a disulfide bond.

As to expression, tentacle (ecto and/or endoderm tissue), and possibly also nematoblasts.

It is found in the secreted. Its subcellular location is the nematocyst. Functionally, peptide with unknown function. Has a limited effect on human peripheral blood mononuclear cells. Does not show activity against both Gram-positive and Gram-negative bacteria nor is it active on the 26 voltage-gated ion channels tested. This is Peptide Hact-1 from Heliofungia actiniformis (Mushroom coral).